Here is a 253-residue protein sequence, read N- to C-terminus: Glutamate racemase (253 aa).

Substrate contacts are provided by residues 7 to 8 (DS) and 39 to 40 (YG). Catalysis depends on cysteine 70, which acts as the Proton donor/acceptor. A substrate-binding site is contributed by 71 to 72 (NT). Cysteine 180 functions as the Proton donor/acceptor in the catalytic mechanism. 181-182 (TH) serves as a coordination point for substrate.

It belongs to the aspartate/glutamate racemases family.

It catalyses the reaction L-glutamate = D-glutamate. The protein operates within cell wall biogenesis; peptidoglycan biosynthesis. Functionally, provides the (R)-glutamate required for cell wall biosynthesis. The sequence is that of Glutamate racemase from Halothermothrix orenii (strain H 168 / OCM 544 / DSM 9562).